The sequence spans 427 residues: Large ribosomal subunit protein uL4 (427 aa).

A2 bears the N-acetylalanine mark. N6-acetyllysine is present on K14. Residue R97 is modified to Omega-N-methylarginine. Residue K106 is modified to N6-acetyllysine. K239 participates in a covalent cross-link: Glycyl lysine isopeptide (Lys-Gly) (interchain with G-Cter in SUMO2). Residue K259 is modified to N6-acetyllysine. T266 carries the phosphothreonine modification. Residues S290 and S295 each carry the phosphoserine modification. At R300 the chain carries Citrulline. A Glycyl lysine isopeptide (Lys-Gly) (interchain with G-Cter in SUMO2) cross-link involves residue K327. K333 and K353 each carry N6-acetyllysine. K364 carries the post-translational modification N6-acetyllysine; alternate. Residue K364 forms a Glycyl lysine isopeptide (Lys-Gly) (interchain with G-Cter in SUMO1); alternate linkage. S365 carries the post-translational modification Phosphoserine. The interval A369–A427 is disordered. Basic residues predominate over residues V377–V397. The span at P407–A427 shows a compositional bias: basic and acidic residues.

Belongs to the universal ribosomal protein uL4 family. Component of the large ribosomal subunit. May bind IPO9 with low affinity. Interacts with RBM3. Post-translationally, citrullinated by PADI4.

Its subcellular location is the cytoplasm. Functionally, component of the large ribosomal subunit. The ribosome is a large ribonucleoprotein complex responsible for the synthesis of proteins in the cell. The sequence is that of Large ribosomal subunit protein uL4 (RPL4) from Macaca fascicularis (Crab-eating macaque).